The following is a 270-amino-acid chain: Autophagy protein 5 (270 aa).

Residue lysine 144 forms a Glycyl lysine isopeptide (Lys-Gly) (interchain with G-Cter in ATG12) linkage.

This sequence belongs to the ATG5 family. Conjugated with ATG12. In terms of processing, conjugated to ATG12; which is essential for autophagy.

It localises to the preautophagosomal structure membrane. In terms of biological role, involved in cytoplasm to vacuole transport (Cvt) and autophagic vesicle formation. Autophagy is essential for maintenance of amino acid levels and protein synthesis under nitrogen starvation. Required for selective autophagic degradation of the nucleus (nucleophagy). Also required for mitophagy, which eliminates defective or superfluous mitochondria in order to fulfill cellular energy requirements and prevent excess ROS production. Conjugation with ATG12, through a ubiquitin-like conjugating system involving ATG7 as an E1-like activating enzyme and ATG10 as an E2-like conjugating enzyme, is essential for its function. The ATG12-ATG5 conjugate acts as an E3-like enzyme which is required for lipidation of ATG8 and ATG8 association to the vesicle membranes. The protein is Autophagy protein 5 (ATG5) of Candida glabrata (strain ATCC 2001 / BCRC 20586 / JCM 3761 / NBRC 0622 / NRRL Y-65 / CBS 138) (Yeast).